We begin with the raw amino-acid sequence, 105 residues long: Met repressor (105 aa).

It belongs to the MetJ family. Homodimer.

The protein resides in the cytoplasm. Its function is as follows. This regulatory protein, when combined with SAM (S-adenosylmethionine) represses the expression of the methionine regulon and of enzymes involved in SAM synthesis. This Erwinia tasmaniensis (strain DSM 17950 / CFBP 7177 / CIP 109463 / NCPPB 4357 / Et1/99) protein is Met repressor.